The sequence spans 491 residues: 3-octaprenyl-4-hydroxybenzoate carboxy-lyase (491 aa).

Asn172 is a binding site for Mn(2+). Prenylated FMN is bound by residues 175–177 (IYR), 189–191 (RWL), and 194–195 (RG). Mn(2+) is bound at residue Glu238. Asp287 (proton donor) is an active-site residue.

The protein belongs to the UbiD family. In terms of assembly, homohexamer. Requires prenylated FMN as cofactor. Mn(2+) is required as a cofactor.

The protein resides in the cell membrane. It carries out the reaction a 4-hydroxy-3-(all-trans-polyprenyl)benzoate + H(+) = a 2-(all-trans-polyprenyl)phenol + CO2. It functions in the pathway cofactor biosynthesis; ubiquinone biosynthesis. Its function is as follows. Catalyzes the decarboxylation of 3-octaprenyl-4-hydroxy benzoate to 2-octaprenylphenol, an intermediate step in ubiquinone biosynthesis. This is 3-octaprenyl-4-hydroxybenzoate carboxy-lyase from Klebsiella pneumoniae subsp. pneumoniae (strain ATCC 700721 / MGH 78578).